The following is a 211-amino-acid chain: Ubiquitin-conjugating enzyme E2 S (211 aa).

The UBC core domain maps to 11 to 157; the sequence is HIIRQVYKEV…ARLMTEIHAQ (147 aa). The Glycyl thioester intermediate role is filled by Cys-95. A disordered region spans residues 157–211; the sequence is QGSSLRGKDPTDPCSSASATLVSGDGPMAKKHAGDRDKKLAAKKKTDKKRALRRL. Residues 197 to 211 show a composition bias toward basic residues; sequence AAKKKTDKKRALRRL.

The protein belongs to the ubiquitin-conjugating enzyme family.

It catalyses the reaction S-ubiquitinyl-[E1 ubiquitin-activating enzyme]-L-cysteine + [E2 ubiquitin-conjugating enzyme]-L-cysteine = [E1 ubiquitin-activating enzyme]-L-cysteine + S-ubiquitinyl-[E2 ubiquitin-conjugating enzyme]-L-cysteine.. It participates in protein modification; protein ubiquitination. Catalyzes the covalent attachment of ubiquitin to other proteins. Acts as an essential factor of the anaphase promoting complex/cyclosome (APC/C), a cell cycle-regulated ubiquitin ligase that controls progression through mitosis. Acts by specifically elongating 'Lys-11'-linked polyubiquitin chains initiated by the E2 enzyme ube2c/ubch10 on APC/C substrates, enhancing the degradation of APC/C substrates by the proteasome and promoting mitotic exit. The sequence is that of Ubiquitin-conjugating enzyme E2 S (ube2s) from Xenopus tropicalis (Western clawed frog).